The primary structure comprises 337 residues: Large ribosomal subunit protein uL3 (337 aa).

The interval 1 to 29 is disordered; the sequence is MPKINRPRRGSLAFSPRKRAQSPIPKYKS.

It belongs to the universal ribosomal protein uL3 family. As to quaternary structure, part of the 50S ribosomal subunit. Forms a cluster with proteins L14 and L24e.

One of the primary rRNA binding proteins, it binds directly near the 3'-end of the 23S rRNA, where it nucleates assembly of the 50S subunit. This is Large ribosomal subunit protein uL3 from Methanoregula boonei (strain DSM 21154 / JCM 14090 / 6A8).